The chain runs to 122 residues: Large ribosomal subunit protein uL18 (122 aa).

Positions 1-21 (MSKLSRKQQTQKRHRRLRRHI) are enriched in basic residues. Residues 1–25 (MSKLSRKQQTQKRHRRLRRHITGTS) form a disordered region.

It belongs to the universal ribosomal protein uL18 family. As to quaternary structure, part of the 50S ribosomal subunit; part of the 5S rRNA/L5/L18/L25 subcomplex. Contacts the 5S and 23S rRNAs.

Its function is as follows. This is one of the proteins that bind and probably mediate the attachment of the 5S RNA into the large ribosomal subunit, where it forms part of the central protuberance. In Synechococcus sp. (strain CC9902), this protein is Large ribosomal subunit protein uL18.